The following is a 134-amino-acid chain: ATP synthase epsilon chain (134 aa).

This sequence belongs to the ATPase epsilon chain family. As to quaternary structure, F-type ATPases have 2 components, CF(1) - the catalytic core - and CF(0) - the membrane proton channel. CF(1) has five subunits: alpha(3), beta(3), gamma(1), delta(1), epsilon(1). CF(0) has three main subunits: a, b and c.

It localises to the cell inner membrane. Functionally, produces ATP from ADP in the presence of a proton gradient across the membrane. The protein is ATP synthase epsilon chain of Sinorhizobium medicae (strain WSM419) (Ensifer medicae).